A 302-amino-acid polypeptide reads, in one-letter code: Cyclin-C (302 aa).

Positions 46-152 constitute a Cyclin N-terminal domain; that stretch reads NFITAVATEG…VYDSEFILVE (107 aa). The disordered stretch occupies residues 281–302; sequence LPKPNQQPPPQQQHQHQQGYHL. Over residues 292–302 the composition is skewed to low complexity; it reads QQHQHQQGYHL.

The protein belongs to the cyclin family. Cyclin C subfamily. Component of the Mediator complex.

It is found in the nucleus. Its function is as follows. Component of the Mediator complex, a coactivator involved in regulated gene transcription of nearly all RNA polymerase II-dependent genes. Mediator functions as a bridge to convey information from gene-specific regulatory proteins to the basal RNA polymerase II transcription machinery. Mediator is recruited to promoters by direct interactions with regulatory proteins and serves as a scaffold for the assembly of a functional preinitiation complex with RNA polymerase II and the general transcription factors. Binds to and activates cyclin-dependent kinase cdk-8 that phosphorylates the CTD (C-terminal domain) of the large subunit of RNA polymerase II (RNAp II), which may inhibit the formation of a transcription initiation complex. This Caenorhabditis elegans protein is Cyclin-C (cic-1).